We begin with the raw amino-acid sequence, 232 residues long: Clarin-1 (232 aa).

Residues Ile8–Leu28 traverse the membrane as a helical segment. A glycan (N-linked (GlcNAc...) asparagine) is linked at Asn48. 2 consecutive transmembrane segments (helical) span residues Ile101–Tyr121 and Leu135–Phe155. An N-linked (GlcNAc...) asparagine glycan is attached at Asn184. A helical transmembrane segment spans residues Thr186–Ile206.

The protein belongs to the clarin family.

The protein localises to the cell membrane. May have a role in the excitatory ribbon synapse junctions between hair cells and cochlear ganglion cells and presumably also in analogous synapses within the retina. The chain is Clarin-1 (Clrn1) from Rattus norvegicus (Rat).